A 196-amino-acid chain; its full sequence is ATP-dependent Clp protease proteolytic subunit (196 aa).

Catalysis depends on Ser96, which acts as the Nucleophile. The active site involves His121.

It belongs to the peptidase S14 family. Fourteen ClpP subunits assemble into 2 heptameric rings which stack back to back to give a disk-like structure with a central cavity, resembling the structure of eukaryotic proteasomes.

The protein resides in the cytoplasm. The catalysed reaction is Hydrolysis of proteins to small peptides in the presence of ATP and magnesium. alpha-casein is the usual test substrate. In the absence of ATP, only oligopeptides shorter than five residues are hydrolyzed (such as succinyl-Leu-Tyr-|-NHMec, and Leu-Tyr-Leu-|-Tyr-Trp, in which cleavage of the -Tyr-|-Leu- and -Tyr-|-Trp bonds also occurs).. Cleaves peptides in various proteins in a process that requires ATP hydrolysis. Has a chymotrypsin-like activity. Plays a major role in the degradation of misfolded proteins. This is ATP-dependent Clp protease proteolytic subunit from Streptococcus agalactiae serotype III (strain NEM316).